A 366-amino-acid chain; its full sequence is Chaperone protein DnaJ (366 aa).

The region spanning 5–69 (DYYEVLGVSK…QKRAQYDQFG (65 aa)) is the J domain. Residues 128 to 210 (GKELNVEIPV…CHGTGKVRKR (83 aa)) form a CR-type zinc finger. 8 residues coordinate Zn(2+): Cys141, Cys144, Cys158, Cys161, Cys184, Cys187, Cys198, and Cys201. CXXCXGXG motif repeat units follow at residues 141-148 (CDTCHGSG), 158-165 (CKYCSGTG), 184-191 (CRHCSGTG), and 198-205 (CTTCHGTG).

It belongs to the DnaJ family. As to quaternary structure, homodimer. Zn(2+) is required as a cofactor.

It localises to the cytoplasm. In terms of biological role, participates actively in the response to hyperosmotic and heat shock by preventing the aggregation of stress-denatured proteins and by disaggregating proteins, also in an autonomous, DnaK-independent fashion. Unfolded proteins bind initially to DnaJ; upon interaction with the DnaJ-bound protein, DnaK hydrolyzes its bound ATP, resulting in the formation of a stable complex. GrpE releases ADP from DnaK; ATP binding to DnaK triggers the release of the substrate protein, thus completing the reaction cycle. Several rounds of ATP-dependent interactions between DnaJ, DnaK and GrpE are required for fully efficient folding. Also involved, together with DnaK and GrpE, in the DNA replication of plasmids through activation of initiation proteins. This Bacillus cytotoxicus (strain DSM 22905 / CIP 110041 / 391-98 / NVH 391-98) protein is Chaperone protein DnaJ.